Reading from the N-terminus, the 499-residue chain is Putative protease Do-like 12, mitochondrial (499 aa).

Residues 1 to 24 constitute a mitochondrion transit peptide; sequence MLFRSCVGMVSRYSRALLPTITIS. Residues 94–259 form a serine protease region; that stretch reads GGSGFAIAGK…IPTPIIRHFI (166 aa). Residues His110, Asp144, and Ser222 each act as charge relay system in the active site. One can recognise a PDZ domain in the interval 272-356; it reads GSLVLSCQSM…DENILVKVLR (85 aa).

It belongs to the peptidase S1C family.

The protein localises to the mitochondrion matrix. In terms of biological role, putative serine protease. This chain is Putative protease Do-like 12, mitochondrial (DEGP12), found in Arabidopsis thaliana (Mouse-ear cress).